The chain runs to 424 residues: Inhibin beta A chain (424 aa).

The first 20 residues, 1 to 20 (MPLLWLRGFLLASCWIIVRS), serve as a signal peptide directing secretion. Positions 21 to 308 (SPTPGSEGHG…EDHPHRRRRR (288 aa)) are excised as a propeptide. Asn-165 carries N-linked (GlcNAc...) asparagine glycosylation. Over residues 264–275 (EVDGDGKKKDGS) the composition is skewed to basic and acidic residues. The interval 264 to 306 (EVDGDGKKKDGSDGGLEEEKEQSHRPFLMLQARQSEDHPHRRR) is disordered. 4 disulfides stabilise this stretch: Cys-312–Cys-320, Cys-319–Cys-389, Cys-348–Cys-421, and Cys-352–Cys-423.

This sequence belongs to the TGF-beta family. Dimeric, linked by one or more disulfide bonds. Inhibin A is a dimer of alpha/INHA and beta-A/INHBA. Activin A is a homodimer of beta-A/INHBA. Activin AB is a dimer of beta-A/INHBA and beta-B/INHBB. Interacts with FST and FSTL3; these interactions prevent activin A interaction to its type II receptor. Activin A interacts with ACVR2A. Activin A interacts with BMPR2. Inhibin A interacts with ACVR1; this interaction creates a non-signaling complex (NSC) that inhibits ACVR1-mediated BMP signaling. Inhibin A interacts with ACVR2A.

The protein localises to the secreted. Its function is as follows. Inhibins/activins are involved in regulating a number of diverse functions such as hypothalamic and pituitary hormone secretion, gonadal hormone secretion, germ cell development and maturation, erythroid differentiation, insulin secretion, nerve cell survival, embryonic axial development or bone growth, depending on their subunit composition. Activin A is a homodimer of INHBA that plays a role in several essential biological processes including embryonic development, stem cell maintenance and differentiation, haematopoiesis, cell proliferation and tissue fibrosis. Signals through type I (such as ACVR1B or ACVR1C) and type II receptors (such as ACVR2A, ACVR2B or BMPR2) which, upon ligand binding, phosphorylate SMAD2 and SMAD3 intracellular signaling mediators that form a complex with SMAD4, translocate to the nucleus and modulate gene expression. Can also activate alternative non-canonical intracellular signaling pathways including the p38 MAPK, extracellular signal-regulated kinases 1/2 (ERK1/2) and c-Jun N-terminal kinases (JNKs) to modulate cell migration and differentiation. Alternatively, promotes osteoblastic differentiation via ACVRL1-SMAD1/5/9 pathway. In addition, can engage the type I receptor ACVR1 to form an ACVR1-activin A-type II receptor non-signaling complex (NSC) that renders receptors unavailable for engagement with BMPs, hence resulting in an apparent inhibition of ACVR1-mediated BMP signaling. In terms of biological role, inhibin A is a dimer of alpha/INHA and beta-A/INHBA that functions as a feedback regulator in the hypothalamic-pituitary-gonadal (HPG) axis. Inhibits the secretion of FSH from the anterior pituitary gland by acting on pituitary gonadotrope cells. Antagonizes activin A by binding to the proteoglycan, betaglycan, and forming a stable complex with and, thereby, sequestering type II activin receptors while excluding type I receptor. The polypeptide is Inhibin beta A chain (Inhba) (Rattus norvegicus (Rat)).